Reading from the N-terminus, the 435-residue chain is D-amino acid dehydrogenase (435 aa).

3 to 17 (VLILGSGVIGTTSAW) lines the FAD pocket.

This sequence belongs to the DadA oxidoreductase family. The cofactor is FAD.

The enzyme catalyses a D-alpha-amino acid + A + H2O = a 2-oxocarboxylate + AH2 + NH4(+). Its pathway is amino-acid degradation; D-alanine degradation; NH(3) and pyruvate from D-alanine: step 1/1. In terms of biological role, oxidative deamination of D-amino acids. The protein is D-amino acid dehydrogenase of Xylella fastidiosa (strain 9a5c).